The chain runs to 448 residues: Exodeoxyribonuclease 7 large subunit (448 aa).

This sequence belongs to the XseA family. In terms of assembly, heterooligomer composed of large and small subunits.

It is found in the cytoplasm. The catalysed reaction is Exonucleolytic cleavage in either 5'- to 3'- or 3'- to 5'-direction to yield nucleoside 5'-phosphates.. Bidirectionally degrades single-stranded DNA into large acid-insoluble oligonucleotides, which are then degraded further into small acid-soluble oligonucleotides. The polypeptide is Exodeoxyribonuclease 7 large subunit (Shewanella sp. (strain ANA-3)).